An 898-amino-acid polypeptide reads, in one-letter code: Putative disease resistance protein At1g63350 (898 aa).

The stretch at 24-88 forms a coiled coil; that stretch reads VSYTHNLEKN…IESRVNDLLN (65 aa). An NB-ARC domain is found at 137–440; it reads DQASTSEVEE…CEEIIDGSEG (304 aa). Position 179–186 (179–186) interacts with ATP; it reads GMGGVGKT. LRR repeat units follow at residues 516 to 537, 538 to 559, 562 to 584, 586 to 608, 609 to 631, and 632 to 654; these read VVRR…LDCM, ELTT…FFNS, KLAV…ISEL, SLQY…QELK, KLIH…SCLH, and NLKV…KELE.

It belongs to the disease resistance NB-LRR family.

Its function is as follows. Potential disease resistance protein. This chain is Putative disease resistance protein At1g63350, found in Arabidopsis thaliana (Mouse-ear cress).